The sequence spans 599 residues: Elongation factor 4 (599 aa).

Residues 4-186 (KYIRNFSIIA…AIVEKVPPPK (183 aa)) enclose the tr-type G domain. Residues 16-21 (DHGKST) and 133-136 (NKID) contribute to the GTP site.

Belongs to the TRAFAC class translation factor GTPase superfamily. Classic translation factor GTPase family. LepA subfamily.

Its subcellular location is the cell inner membrane. It carries out the reaction GTP + H2O = GDP + phosphate + H(+). In terms of biological role, required for accurate and efficient protein synthesis under certain stress conditions. May act as a fidelity factor of the translation reaction, by catalyzing a one-codon backward translocation of tRNAs on improperly translocated ribosomes. Back-translocation proceeds from a post-translocation (POST) complex to a pre-translocation (PRE) complex, thus giving elongation factor G a second chance to translocate the tRNAs correctly. Binds to ribosomes in a GTP-dependent manner. In Bdellovibrio bacteriovorus (strain ATCC 15356 / DSM 50701 / NCIMB 9529 / HD100), this protein is Elongation factor 4.